A 536-amino-acid chain; its full sequence is Ribulokinase (536 aa).

It belongs to the ribulokinase family.

It carries out the reaction D-ribulose + ATP = D-ribulose 5-phosphate + ADP + H(+). The enzyme catalyses L-ribulose + ATP = L-ribulose 5-phosphate + ADP + H(+). The protein operates within carbohydrate degradation; L-arabinose degradation via L-ribulose; D-xylulose 5-phosphate from L-arabinose (bacterial route): step 2/3. In Staphylococcus epidermidis (strain ATCC 12228 / FDA PCI 1200), this protein is Ribulokinase.